Reading from the N-terminus, the 295-residue chain is Nitrogenase iron protein 1 (295 aa).

Residue G12–S19 coordinates ATP. C100 is a binding site for [4Fe-4S] cluster. Residue R103 is modified to ADP-ribosylarginine; by dinitrogenase reductase ADP-ribosyltransferase. C134 serves as a coordination point for [4Fe-4S] cluster.

The protein belongs to the NifH/BchL/ChlL family. In terms of assembly, homodimer. The cofactor is [4Fe-4S] cluster. Post-translationally, the reversible ADP-ribosylation of Arg-103 inactivates the nitrogenase reductase and regulates nitrogenase activity.

It carries out the reaction N2 + 8 reduced [2Fe-2S]-[ferredoxin] + 16 ATP + 16 H2O = H2 + 8 oxidized [2Fe-2S]-[ferredoxin] + 2 NH4(+) + 16 ADP + 16 phosphate + 6 H(+). Its function is as follows. The key enzymatic reactions in nitrogen fixation are catalyzed by the nitrogenase complex, which has 2 components: the iron protein and the molybdenum-iron protein. This Mastigocladus laminosus (Fischerella sp.) protein is Nitrogenase iron protein 1 (nifH1).